The following is a 399-amino-acid chain: Tryptophan synthase beta chain (399 aa).

Lys92 is subject to N6-(pyridoxal phosphate)lysine.

The protein belongs to the TrpB family. Tetramer of two alpha and two beta chains. Pyridoxal 5'-phosphate is required as a cofactor.

It carries out the reaction (1S,2R)-1-C-(indol-3-yl)glycerol 3-phosphate + L-serine = D-glyceraldehyde 3-phosphate + L-tryptophan + H2O. The protein operates within amino-acid biosynthesis; L-tryptophan biosynthesis; L-tryptophan from chorismate: step 5/5. Its function is as follows. The beta subunit is responsible for the synthesis of L-tryptophan from indole and L-serine. In Oceanobacillus iheyensis (strain DSM 14371 / CIP 107618 / JCM 11309 / KCTC 3954 / HTE831), this protein is Tryptophan synthase beta chain.